The sequence spans 357 residues: DNA integrity scanning protein DisA (357 aa).

Residues 8-146 form the DAC domain; that stretch reads VKSIINILQL…GNLRYTLKDI (139 aa). Residues Gly75, Leu93, and 106–110 contribute to the ATP site; that span reads MRHRT.

Belongs to the DisA family. As to quaternary structure, homooctamer. Mg(2+) serves as cofactor.

The catalysed reaction is 2 ATP = 3',3'-c-di-AMP + 2 diphosphate. Functionally, participates in a DNA-damage check-point that is active prior to asymmetric division when DNA is damaged. DisA forms globular foci that rapidly scan along the chromosomes during sporulation, searching for lesions. When a lesion is present, DisA pauses at the lesion site. This triggers a cellular response that culminates in a temporary block in sporulation initiation. Also has diadenylate cyclase activity, catalyzing the condensation of 2 ATP molecules into cyclic di-AMP (c-di-AMP). c-di-AMP acts as a signaling molecule that couples DNA integrity with progression of sporulation. The rise in c-di-AMP level generated by DisA while scanning the chromosome, operates as a positive signal that advances sporulation; upon encountering a lesion, the DisA focus arrests at the damaged site and halts c-di-AMP synthesis. In Bacillus cereus (strain B4264), this protein is DNA integrity scanning protein DisA.